A 1310-amino-acid polypeptide reads, in one-letter code: Multidrug resistance protein 4 (1310 aa).

5 helical membrane-spanning segments follow: residues 48 to 68, 125 to 145, 196 to 216, 223 to 243, and 299 to 319; these read WLDL…GVLT, MVCF…CFFV, KFGI…IGFA, LVIM…AVFA, and GLTV…AFSL. One can recognise an ABC transmembrane type-1 1 domain in the interval 55-368; that stretch reads AVGIFGSIGC…IAIPLNIFAT (314 aa). The N-linked (GlcNAc...) asparagine glycan is linked to Asn-336. A helical transmembrane segment spans residues 342–362; that stretch reads VMIVFICVLIATQGLSIIAIP. Residue Asn-402 is glycosylated (N-linked (GlcNAc...) asparagine). The ABC transporter 1 domain maps to 403–642; sequence ITLEDVQFRY…KGTYYGLVKR (240 aa). 438–445 lines the ATP pocket; it reads GASGCGKS. N-linked (GlcNAc...) asparagine glycosylation occurs at Asn-608. 2 helical membrane-spanning segments follow: residues 721-741 and 773-793; these read WFLS…FPFF and IIVV…IGLF. Residues 722 to 1030 form the ABC transmembrane type-1 2 domain; it reads FLSTFGFIGG…LGNIVPDIGK (309 aa). A glycan (N-linked (GlcNAc...) asparagine) is linked at Asn-816. The next 3 helical transmembrane spans lie at 849–869, 871–891, and 945–965; these read VGNV…AFYY, WKVS…VFIN, and IGIY…TLLT. An ABC transporter 2 domain is found at 1065–1304; sequence IEFKDICFRY…KGFYYTLAMQ (240 aa). 1100 to 1107 contributes to the ATP binding site; it reads GASGCGKS.

The protein belongs to the ABC transporter superfamily. ABCB family. Multidrug resistance exporter (TC 3.A.1.201) subfamily.

Its subcellular location is the membrane. It carries out the reaction ATP + H2O + xenobioticSide 1 = ADP + phosphate + xenobioticSide 2.. In terms of biological role, energy-dependent efflux pump responsible for decreased drug accumulation in multidrug resistance parasites. This is Multidrug resistance protein 4 from Entamoeba histolytica (strain ATCC 30459 / HM-1:IMSS / ABRM).